The sequence spans 718 residues: Protein Hook homolog 1 (718 aa).

The Calponin-homology (CH) domain occupies 8–124; sequence PLLCDSLILW…RLMQLILGCA (117 aa). Coiled-coil stretches lie at residues 164–428 and 473–652; these read SASD…ELRY and LLLQ…AKLR.

This sequence belongs to the hook family. In terms of assembly, interacts with microtubules.

The protein resides in the cytoplasm. It is found in the cytoskeleton. Functionally, may function to promote vesicle trafficking and/or fusion. This Gallus gallus (Chicken) protein is Protein Hook homolog 1 (HOOK1).